We begin with the raw amino-acid sequence, 81 residues long: MRKLALVPIRFYRYAISPLMASHCRFYPSCSCYAYEAIENHGLLRGGWLTFRRLGRCHPWNPGGYDPVPPIPTSRSSSMAE.

A disordered region spans residues 61 to 81 (NPGGYDPVPPIPTSRSSSMAE).

This sequence belongs to the UPF0161 family.

The protein localises to the cell inner membrane. Functionally, could be involved in insertion of integral membrane proteins into the membrane. The sequence is that of Putative membrane protein insertion efficiency factor from Pseudomonas fluorescens (strain Pf0-1).